A 259-amino-acid chain; its full sequence is Ribosomal RNA small subunit methyltransferase J (259 aa).

S-adenosyl-L-methionine contacts are provided by residues 101 to 102 (RD), 117 to 118 (ER), 153 to 154 (SS), and D176.

The protein belongs to the methyltransferase superfamily. RsmJ family.

It is found in the cytoplasm. The enzyme catalyses guanosine(1516) in 16S rRNA + S-adenosyl-L-methionine = N(2)-methylguanosine(1516) in 16S rRNA + S-adenosyl-L-homocysteine + H(+). In terms of biological role, specifically methylates the guanosine in position 1516 of 16S rRNA. The sequence is that of Ribosomal RNA small subunit methyltransferase J from Aliivibrio fischeri (strain ATCC 700601 / ES114) (Vibrio fischeri).